We begin with the raw amino-acid sequence, 330 residues long: Polyprenal reductase (330 aa).

At 1–16 (MAGWAGAELSVLNPLR) the chain is on the cytoplasmic side. A helical membrane pass occupies residues 17–37 (ALWLLLAAAFLLALLLQLAPA). Over 38 to 89 (RLLPSCALFQDLIRYGKTKQSGSRRPAVCRAFDVPKRYFSHFYVVSVLWNGS) the chain is Lumenal. Residues 90-110 (LLWFLSQSLFLGAPFPSWLWA) traverse the membrane as a helical segment. Over 111 to 136 (LLRTLGVTQFQALGMESKASRIQGKK) the chain is Cytoplasmic. Residues 137–157 (LALSTFLVLVFLWVHSLRRLF) traverse the membrane as a helical segment. At 158-169 (ECFYVSVFSNTA) the chain is on the lumenal side. A helical membrane pass occupies residues 170 to 190 (IHVVQYCFGLVYYVLVGLTVL). The Cytoplasmic portion of the chain corresponds to 191–206 (SQVPMNDKNVYALGKN). The chain crosses the membrane as a helical span at residues 207 to 227 (LLLQARWFHILGMMMFFWSSA). Topologically, residues 228 to 277 (HQYKCHVILSNLRRNKKGVVIHCQHRIPFGDWFEYVSSANYLAELMIYIS) are lumenal. A helical transmembrane segment spans residues 278–298 (MAVTFGLHNVTWWLVVTYVFF). Residues 299–330 (SQALSAFFNHRFYKSTFVSYPKHRKAFLPFLF) are Cytoplasmic-facing.

Belongs to the steroid 5-alpha reductase family. Polyprenal reductase subfamily. Expressed in the 2 tissues tested i.e. testis and liver.

Its subcellular location is the endoplasmic reticulum membrane. The enzyme catalyses a di-trans,poly-cis-dolichal + NADP(+) = a di-trans,poly-cis-polyprenal + NADPH + H(+). It carries out the reaction a 3-oxo-5alpha-steroid + NADP(+) = a 3-oxo-Delta(4)-steroid + NADPH + H(+). It catalyses the reaction androst-4-ene-3,17-dione + NADPH + H(+) = 5alpha-androstan-3,17-dione + NADP(+). The catalysed reaction is 17beta-hydroxy-5alpha-androstan-3-one + NADP(+) = testosterone + NADPH + H(+). It functions in the pathway protein modification; protein glycosylation. In terms of biological role, plays a key role in early steps of protein N-linked glycosylation by being involved in the conversion of polyprenol into dolichol. Acts as a polyprenal reductase that mediates the reduction of polyprenal into dolichal in a NADP-dependent mechanism. Dolichols are required for the synthesis of dolichol-linked monosaccharides and the oligosaccharide precursor used for N-glycosylation. Also able to convert testosterone (T) into 5-alpha-dihydrotestosterone (DHT). The chain is Polyprenal reductase from Rattus norvegicus (Rat).